Here is a 112-residue protein sequence, read N- to C-terminus: Large ribosomal subunit protein P1 (112 aa).

A compositionally biased stretch (low complexity) spans 71 to 90 (PAQAAAAAPAGGAPAAAAPA). The interval 71-112 (PAQAAAAAPAGGAPAAAAPAESKEGRRSQGESDDDMGFGLLD) is disordered. Positions 91 to 100 (ESKEGRRSQG) are enriched in basic and acidic residues.

Belongs to the eukaryotic ribosomal protein P1/P2 family. As to quaternary structure, P1 and P2 exist as dimers at the large ribosomal subunit.

Its function is as follows. Plays an important role in the elongation step of protein synthesis. In Oscheius tipulae, this protein is Large ribosomal subunit protein P1 (rpl-21).